Reading from the N-terminus, the 107-residue chain is MVNFNQFLKQAQSMQKKMQEAQEQMANARYTGKAGGGLVEIIITGKGEVAKISIDESLLKSEEKEMLEDLIKVAFNDAKQKCDEDSQNSLSGALNGMSLPPGFKMPF.

Belongs to the YbaB/EbfC family. As to quaternary structure, homodimer.

Its subcellular location is the cytoplasm. It is found in the nucleoid. Its function is as follows. Binds to DNA and alters its conformation. May be involved in regulation of gene expression, nucleoid organization and DNA protection. This chain is Nucleoid-associated protein A1C_06705, found in Rickettsia akari (strain Hartford).